The sequence spans 57 residues: Orphan toxin OrtT (57 aa).

Helical transmembrane passes span 6–26 (HMLV…WFLS) and 34–54 (FLSA…ALLF).

The protein belongs to the GhoT/OrtT toxin family.

It is found in the cell inner membrane. Functionally, acts as an orphan toxin which is important for maintaining cell fitness during stress related to the stringent response. Increases the formation of persister cells. Has no known antitoxin. This Escherichia coli O6:H1 (strain CFT073 / ATCC 700928 / UPEC) protein is Orphan toxin OrtT.